A 409-amino-acid chain; its full sequence is Tryptophan synthase beta chain (409 aa).

Lys-95 is subject to N6-(pyridoxal phosphate)lysine.

This sequence belongs to the TrpB family. As to quaternary structure, tetramer of two alpha and two beta chains. Pyridoxal 5'-phosphate is required as a cofactor.

It catalyses the reaction (1S,2R)-1-C-(indol-3-yl)glycerol 3-phosphate + L-serine = D-glyceraldehyde 3-phosphate + L-tryptophan + H2O. It participates in amino-acid biosynthesis; L-tryptophan biosynthesis; L-tryptophan from chorismate: step 5/5. Functionally, the beta subunit is responsible for the synthesis of L-tryptophan from indole and L-serine. This chain is Tryptophan synthase beta chain, found in Pseudomonas syringae pv. tomato (strain ATCC BAA-871 / DC3000).